A 288-amino-acid polypeptide reads, in one-letter code: ATP synthase subunit a (288 aa).

A run of 6 helical transmembrane segments spans residues 47–67, 104–124, 157–177, 199–219, 237–257, and 258–278; these read LDSM…FWMV, LIAP…LMDL, DPNI…FYSI, PIVQ…TLIA, LIFI…SVPW, and AIFH…LTIV.

It belongs to the ATPase A chain family. F-type ATPases have 2 components, CF(1) - the catalytic core - and CF(0) - the membrane proton channel. CF(1) has five subunits: alpha(3), beta(3), gamma(1), delta(1), epsilon(1). CF(0) has three main subunits: a(1), b(2) and c(9-12). The alpha and beta chains form an alternating ring which encloses part of the gamma chain. CF(1) is attached to CF(0) by a central stalk formed by the gamma and epsilon chains, while a peripheral stalk is formed by the delta and b chains.

It is found in the cell inner membrane. Its function is as follows. Key component of the proton channel; it plays a direct role in the translocation of protons across the membrane. This Psychrobacter cryohalolentis (strain ATCC BAA-1226 / DSM 17306 / VKM B-2378 / K5) protein is ATP synthase subunit a.